We begin with the raw amino-acid sequence, 794 residues long: Signal transducer and activator of transcription 5A (794 aa).

Position 90 is a phosphotyrosine (Tyr-90). Ser-128 bears the Phosphoserine mark. An SH2 domain is found at 589 to 686; the sequence is WNDGAILGFV…EVFSKYYTPV (98 aa). Tyr-682 is subject to Phosphotyrosine. A Phosphotyrosine; by JAK2 modification is found at Tyr-694. A disordered region spans residues 771-794; the sequence is PMDSLEPSLPPPTGLFTPGRGSLS.

It belongs to the transcription factor STAT family. Forms a homodimer or a heterodimer with a related family member. Binds NR3C1. Interacts with NCOA1 and SOCS7. Interacts with ERBB4. Interacts with EBF4. Interacts with CD69. In terms of processing, ISGylated. Tyrosine phosphorylated in response to KITLG/SCF, IL2, IL3, IL7, IL15, CSF2/GMCSF, GH1, PRL, EPO and THPO. Activated KIT promotes phosphorylation on tyrosine residues and subsequent translocation to the nucleus. Tyrosine phosphorylated in response to constitutively activated FGFR1, FGFR2, FGFR3 and FGFR4. Tyrosine phosphorylation is required for DNA-binding activity and dimerization. Serine phosphorylation is also required for maximal transcriptional activity. Tyrosine phosphorylated in response to signaling via activated FLT3; wild-type FLT3 results in much weaker phosphorylation than constitutively activated mutant FLT3. Alternatively, can be phosphorylated by JAK2 at Tyr-694.

The protein localises to the cytoplasm. The protein resides in the nucleus. Its function is as follows. Carries out a dual function: signal transduction and activation of transcription. Mediates cellular responses to the cytokine KITLG/SCF and other growth factors. May mediate cellular responses to activated FGFR1, FGFR2, FGFR3 and FGFR4. Binds to the GAS element and activates PRL-induced transcription. Regulates the expression of milk proteins during lactation. This is Signal transducer and activator of transcription 5A (STAT5A) from Bos taurus (Bovine).